A 263-amino-acid polypeptide reads, in one-letter code: MTQTNQAPLVIKLGGAALSCTQTLSQLFGAIAAYQKSAQRQIAIVHGGGYLVDELMTKLQLETVKKNGLRVTPYEQIPVIAGALAGTANKLLQGQAIADGLNAVGLSLADGGLCHVEELDPELGAVGKASPGDSTLLQAVLNAGALPIISSIGLTEKGQMMNVNADQAAVAVAGALDAELVLLSDVSGVLDGKGHLIKTLSEQEADALIQGQVITDGMIVKVKAALEAANDLGRPIEVATWRYPEKLTQLFAGESIGTQFLPQ.

Residues 48-49 (GG), Arg70, and Asn162 each bind substrate.

The protein belongs to the acetylglutamate kinase family. ArgB subfamily.

The protein localises to the cytoplasm. It carries out the reaction N-acetyl-L-glutamate + ATP = N-acetyl-L-glutamyl 5-phosphate + ADP. Its pathway is amino-acid biosynthesis; L-arginine biosynthesis; N(2)-acetyl-L-ornithine from L-glutamate: step 2/4. Its function is as follows. Catalyzes the ATP-dependent phosphorylation of N-acetyl-L-glutamate. This Vibrio campbellii (strain ATCC BAA-1116) protein is Acetylglutamate kinase.